A 291-amino-acid polypeptide reads, in one-letter code: 4-hydroxy-tetrahydrodipicolinate synthase (291 aa).

T44 is a pyruvate binding site. Residue Y132 is the Proton donor/acceptor of the active site. The active-site Schiff-base intermediate with substrate is K160. I202 provides a ligand contact to pyruvate.

Belongs to the DapA family. In terms of assembly, homotetramer; dimer of dimers.

Its subcellular location is the cytoplasm. The catalysed reaction is L-aspartate 4-semialdehyde + pyruvate = (2S,4S)-4-hydroxy-2,3,4,5-tetrahydrodipicolinate + H2O + H(+). Its pathway is amino-acid biosynthesis; L-lysine biosynthesis via DAP pathway; (S)-tetrahydrodipicolinate from L-aspartate: step 3/4. Its function is as follows. Catalyzes the condensation of (S)-aspartate-beta-semialdehyde [(S)-ASA] and pyruvate to 4-hydroxy-tetrahydrodipicolinate (HTPA). The protein is 4-hydroxy-tetrahydrodipicolinate synthase of Zymomonas mobilis subsp. mobilis (strain ATCC 31821 / ZM4 / CP4).